The following is a 203-amino-acid chain: ATP-dependent Clp protease proteolytic subunit (203 aa).

Ser103 acts as the Nucleophile in catalysis. His128 is an active-site residue.

The protein belongs to the peptidase S14 family. As to quaternary structure, fourteen ClpP subunits assemble into 2 heptameric rings which stack back to back to give a disk-like structure with a central cavity, resembling the structure of eukaryotic proteasomes.

It localises to the cytoplasm. The catalysed reaction is Hydrolysis of proteins to small peptides in the presence of ATP and magnesium. alpha-casein is the usual test substrate. In the absence of ATP, only oligopeptides shorter than five residues are hydrolyzed (such as succinyl-Leu-Tyr-|-NHMec, and Leu-Tyr-Leu-|-Tyr-Trp, in which cleavage of the -Tyr-|-Leu- and -Tyr-|-Trp bonds also occurs).. Cleaves peptides in various proteins in a process that requires ATP hydrolysis. Has a chymotrypsin-like activity. Plays a major role in the degradation of misfolded proteins. This Dichelobacter nodosus (strain VCS1703A) protein is ATP-dependent Clp protease proteolytic subunit.